The following is a 195-amino-acid chain: HTH-type transcriptional regulator BetI (195 aa).

In terms of domain architecture, HTH tetR-type spans 8–68 (SIRRRQLIDA…ATMRDITSQL (61 aa)). Positions 31–50 (TIAQIARRAGVSTGIISHYF) form a DNA-binding region, H-T-H motif.

The protein operates within amine and polyamine biosynthesis; betaine biosynthesis via choline pathway [regulation]. Repressor involved in the biosynthesis of the osmoprotectant glycine betaine. It represses transcription of the choline transporter BetT and the genes of BetAB involved in the synthesis of glycine betaine. This Escherichia coli (strain K12 / DH10B) protein is HTH-type transcriptional regulator BetI.